The following is a 246-amino-acid chain: tRNA pseudouridine synthase A (246 aa).

Catalysis depends on aspartate 52, which acts as the Nucleophile. Substrate is bound at residue tyrosine 111.

This sequence belongs to the tRNA pseudouridine synthase TruA family. As to quaternary structure, homodimer.

The enzyme catalyses uridine(38/39/40) in tRNA = pseudouridine(38/39/40) in tRNA. Its function is as follows. Formation of pseudouridine at positions 38, 39 and 40 in the anticodon stem and loop of transfer RNAs. The protein is tRNA pseudouridine synthase A of Borreliella afzelii (strain PKo) (Borrelia afzelii).